The following is a 37-amino-acid chain: Large ribosomal subunit protein bL36 (37 aa).

This sequence belongs to the bacterial ribosomal protein bL36 family.

The polypeptide is Large ribosomal subunit protein bL36 (Streptomyces avermitilis (strain ATCC 31267 / DSM 46492 / JCM 5070 / NBRC 14893 / NCIMB 12804 / NRRL 8165 / MA-4680)).